Reading from the N-terminus, the 212-residue chain is Uracil phosphoribosyltransferase (212 aa).

5-phospho-alpha-D-ribose 1-diphosphate-binding positions include Arg-78, Arg-103, and 130 to 138; that span reads DPMLATGGS. Uracil-binding positions include Ile-193 and 198 to 200; that span reads GDA. Asp-199 is a binding site for 5-phospho-alpha-D-ribose 1-diphosphate.

The protein belongs to the UPRTase family. Mg(2+) serves as cofactor.

It carries out the reaction UMP + diphosphate = 5-phospho-alpha-D-ribose 1-diphosphate + uracil. It functions in the pathway pyrimidine metabolism; UMP biosynthesis via salvage pathway; UMP from uracil: step 1/1. Its activity is regulated as follows. Allosterically activated by GTP. Functionally, catalyzes the conversion of uracil and 5-phospho-alpha-D-ribose 1-diphosphate (PRPP) to UMP and diphosphate. The polypeptide is Uracil phosphoribosyltransferase (Bordetella avium (strain 197N)).